The chain runs to 394 residues: ATP phosphoribosyltransferase regulatory subunit (394 aa).

This sequence belongs to the class-II aminoacyl-tRNA synthetase family. HisZ subfamily. In terms of assembly, heteromultimer composed of HisG and HisZ subunits.

It localises to the cytoplasm. Its pathway is amino-acid biosynthesis; L-histidine biosynthesis; L-histidine from 5-phospho-alpha-D-ribose 1-diphosphate: step 1/9. In terms of biological role, required for the first step of histidine biosynthesis. May allow the feedback regulation of ATP phosphoribosyltransferase activity by histidine. This chain is ATP phosphoribosyltransferase regulatory subunit, found in Geobacillus kaustophilus (strain HTA426).